The chain runs to 123 residues: Secreted LysM effector Lys1 (123 aa).

The first 20 residues, 1 to 20, serve as a signal peptide directing secretion; that stretch reads MMGLAKTLLLASQLTAVVVA. Residues 72–118 enclose the LysM domain; it reads KFCWVQAGNKCYQVAMENHISLADFLKWNPGAGSDCRTLWANTYACV.

Belongs to the secreted LysM effector family.

Might have a role in sequestration of chitin oligosaccharides (breakdown products of fungal cell walls that are released during invasion and act as triggers of host immunity) to dampen host defense. The polypeptide is Secreted LysM effector Lys1 (Pochonia chlamydosporia (strain 123) (Metacordyceps chlamydosporia)).